The following is a 303-amino-acid chain: Ribonuclease P protein subunit p40 (303 aa).

As to quaternary structure, component of nuclear RNase P and RNase MRP ribonucleoproteins. RNase P consists of a catalytic RNA moiety and about 10 protein subunits; POP1, POP4, POP5, POP7, RPP14, RPP21, RPP25, RPP30, RPP38 and RPP40. Within the RNase P complex, POP1, POP7 and RPP25 form the 'finger' subcomplex, POP5, RPP14, RPP40 and homodimeric RPP30 form the 'palm' subcomplex, and RPP21, POP4 and RPP38 form the 'wrist' subcomplex. All subunits of the RNase P complex interact with the catalytic RNA. Several subunits of RNase P are also part of the RNase MRP complex. RNase MRP consists of a catalytic RNA moiety and about 8 protein subunits; POP1, POP7, RPP25, RPP30, RPP38, RPP40 and possibly also POP4 and POP5.

The protein localises to the nucleus. It is found in the nucleolus. Functionally, component of ribonuclease P, a ribonucleoprotein complex that generates mature tRNA molecules by cleaving their 5'-ends. Also a component of the MRP ribonuclease complex, which cleaves pre-rRNA sequences. The polypeptide is Ribonuclease P protein subunit p40 (RPP40) (Bos taurus (Bovine)).